The chain runs to 391 residues: Outer membrane protein 41 (391 aa).

Positions 1–20 (MKVKYLMLTLVGAIALNASA) are cleaved as a signal peptide. The residue at position 21 (Gln-21) is a Pyrrolidone carboxylic acid. Positions 282-391 (TKTENILTEK…WNRVVIVRSK (110 aa)) constitute an OmpA-like domain.

Belongs to the outer membrane OOP (TC 1.B.6) superfamily. In terms of assembly, disulfide-linked heterodimer with Omp40.

The protein localises to the cell outer membrane. May have porin activity and function in peptidoglycan binding. This Porphyromonas gingivalis (strain ATCC BAA-308 / W83) protein is Outer membrane protein 41.